The sequence spans 282 residues: Putative 4-diphosphocytidyl-2-C-methyl-D-erythritol kinase (282 aa).

Lys-9 is an active-site residue. Position 93-103 (Pro-93–Ala-103) interacts with ATP. Asp-135 is an active-site residue.

Belongs to the GHMP kinase family. IspE subfamily.

It carries out the reaction 4-CDP-2-C-methyl-D-erythritol + ATP = 4-CDP-2-C-methyl-D-erythritol 2-phosphate + ADP + H(+). Catalyzes the phosphorylation of the position 2 hydroxy group of 4-diphosphocytidyl-2C-methyl-D-erythritol. This Staphylococcus aureus (strain MRSA252) protein is Putative 4-diphosphocytidyl-2-C-methyl-D-erythritol kinase.